The primary structure comprises 291 residues: MDFFSPAKLNLFLKLHGKTSRGFHEMTTQYQVIDFGDTLCLERSNEDTLICNLPELSTPQNLVWKSLQIFRDYTQVNDPVAWRLHKRIPIGAGVGGGSSNAATALYALNEHFQTQLSNDELQELGKKIGMDVPLFFSSGSAIGVGCGEEILPYEDYNCEERYVLYFSDQGVLTKDAFSYVHPEDFSHRKDAIALYERDNDLEKSVFRFRKDLEEKKQMLKRMWSPFHAHVGMSGAGATLFVSYPREMETDPSVAKAIHTTIQDSHGLLVNSLRKQSSGWFLNSDNLFTAAR.

Residue lysine 8 is part of the active site. 89–99 (PIGAGVGGGSS) is an ATP binding site. Aspartate 131 is an active-site residue.

Belongs to the GHMP kinase family. IspE subfamily.

It carries out the reaction 4-CDP-2-C-methyl-D-erythritol + ATP = 4-CDP-2-C-methyl-D-erythritol 2-phosphate + ADP + H(+). The protein operates within isoprenoid biosynthesis; isopentenyl diphosphate biosynthesis via DXP pathway; isopentenyl diphosphate from 1-deoxy-D-xylulose 5-phosphate: step 3/6. Its function is as follows. Catalyzes the phosphorylation of the position 2 hydroxy group of 4-diphosphocytidyl-2C-methyl-D-erythritol. This chain is 4-diphosphocytidyl-2-C-methyl-D-erythritol kinase, found in Chlamydia caviae (strain ATCC VR-813 / DSM 19441 / 03DC25 / GPIC) (Chlamydophila caviae).